Consider the following 31-residue polypeptide: Cytochrome b6-f complex subunit 6 (31 aa).

The chain crosses the membrane as a helical span at residues 4 to 24; it reads VVSYLGILAAFALVTIGIFLV.

This sequence belongs to the PetL family. The 4 large subunits of the cytochrome b6-f complex are cytochrome b6, subunit IV (17 kDa polypeptide, PetD), cytochrome f and the Rieske protein, while the 4 small subunits are PetG, PetL, PetM and PetN. The complex functions as a dimer.

Its subcellular location is the plastid. It localises to the chloroplast thylakoid membrane. In terms of biological role, component of the cytochrome b6-f complex, which mediates electron transfer between photosystem II (PSII) and photosystem I (PSI), cyclic electron flow around PSI, and state transitions. PetL is important for photoautotrophic growth as well as for electron transfer efficiency and stability of the cytochrome b6-f complex. This is Cytochrome b6-f complex subunit 6 from Mesostigma viride (Green alga).